Consider the following 225-residue polypeptide: tRNA (guanine-N(7)-)-methyltransferase (225 aa).

Glu56, Glu81, Asp108, and Asp131 together coordinate S-adenosyl-L-methionine. Residue Asp131 is part of the active site. Substrate-binding positions include Lys135, Asp167, and 204-207 (TKFE).

It belongs to the class I-like SAM-binding methyltransferase superfamily. TrmB family.

The enzyme catalyses guanosine(46) in tRNA + S-adenosyl-L-methionine = N(7)-methylguanosine(46) in tRNA + S-adenosyl-L-homocysteine. The protein operates within tRNA modification; N(7)-methylguanine-tRNA biosynthesis. Functionally, catalyzes the formation of N(7)-methylguanine at position 46 (m7G46) in tRNA. The sequence is that of tRNA (guanine-N(7)-)-methyltransferase from Legionella pneumophila (strain Corby).